Reading from the N-terminus, the 653-residue chain is tRNA 5-methylaminomethyl-2-thiouridine biosynthesis bifunctional protein MnmC (653 aa).

Positions 1–233 (MKTAPITPGR…KRDITVARFT (233 aa)) are tRNA (mnm(5)s(2)U34)-methyltransferase. Residues 258 to 653 (IGAGLAGCAA…YALPRWRSDS (396 aa)) form an FAD-dependent cmnm(5)s(2)U34 oxidoreductase region.

In the N-terminal section; belongs to the methyltransferase superfamily. tRNA (mnm(5)s(2)U34)-methyltransferase family. This sequence in the C-terminal section; belongs to the DAO family. It depends on FAD as a cofactor.

It is found in the cytoplasm. The catalysed reaction is 5-aminomethyl-2-thiouridine(34) in tRNA + S-adenosyl-L-methionine = 5-methylaminomethyl-2-thiouridine(34) in tRNA + S-adenosyl-L-homocysteine + H(+). Functionally, catalyzes the last two steps in the biosynthesis of 5-methylaminomethyl-2-thiouridine (mnm(5)s(2)U) at the wobble position (U34) in tRNA. Catalyzes the FAD-dependent demodification of cmnm(5)s(2)U34 to nm(5)s(2)U34, followed by the transfer of a methyl group from S-adenosyl-L-methionine to nm(5)s(2)U34, to form mnm(5)s(2)U34. The protein is tRNA 5-methylaminomethyl-2-thiouridine biosynthesis bifunctional protein MnmC of Methylibium petroleiphilum (strain ATCC BAA-1232 / LMG 22953 / PM1).